We begin with the raw amino-acid sequence, 163 residues long: Bacterial microcompartment assembly protein PduM (163 aa).

The protein belongs to the PduM family. Interacts with shell protein PduK.

Its subcellular location is the bacterial microcompartment. Its pathway is polyol metabolism; 1,2-propanediol degradation. In terms of biological role, plays an essential role in assembly and/or stability of the bacterial microcompartment (BMC) dedicated to 1,2-propanediol (1,2-PD) degradation. Expression of a cosmid containing the full 21-gene pdu operon in E.coli allows E.coli to grow on 1,2-propanediol (1,2-PD) with the appearance of bacterial microcompartments (BMC) in its cytoplasm. Functionally, the 1,2-PD-specific bacterial microcompartment (BMC) concentrates low levels of 1,2-PD catabolic enzymes, concentrates volatile reaction intermediates thus enhancing pathway flux and keeps the level of toxic, mutagenic propionaldehyde low. The sequence is that of Bacterial microcompartment assembly protein PduM from Citrobacter freundii.